The primary structure comprises 196 residues: ATP-dependent Clp protease proteolytic subunit (196 aa).

S96 functions as the Nucleophile in the catalytic mechanism. H121 is an active-site residue.

It belongs to the peptidase S14 family. Fourteen ClpP subunits assemble into 2 heptameric rings which stack back to back to give a disk-like structure with a central cavity, resembling the structure of eukaryotic proteasomes.

The protein localises to the cytoplasm. The enzyme catalyses Hydrolysis of proteins to small peptides in the presence of ATP and magnesium. alpha-casein is the usual test substrate. In the absence of ATP, only oligopeptides shorter than five residues are hydrolyzed (such as succinyl-Leu-Tyr-|-NHMec, and Leu-Tyr-Leu-|-Tyr-Trp, in which cleavage of the -Tyr-|-Leu- and -Tyr-|-Trp bonds also occurs).. In terms of biological role, cleaves peptides in various proteins in a process that requires ATP hydrolysis. Has a chymotrypsin-like activity. Plays a major role in the degradation of misfolded proteins. This is ATP-dependent Clp protease proteolytic subunit from Streptococcus agalactiae serotype III (strain NEM316).